The chain runs to 330 residues: Ferrochelatase (330 aa).

Positions 200 and 281 each coordinate Fe cation.

The protein belongs to the ferrochelatase family.

It localises to the cytoplasm. The enzyme catalyses heme b + 2 H(+) = protoporphyrin IX + Fe(2+). It functions in the pathway porphyrin-containing compound metabolism; protoheme biosynthesis; protoheme from protoporphyrin-IX: step 1/1. Catalyzes the ferrous insertion into protoporphyrin IX. In Marinomonas sp. (strain MWYL1), this protein is Ferrochelatase.